We begin with the raw amino-acid sequence, 225 residues long: NAD(P)H-quinone oxidoreductase subunit K, chloroplastic (225 aa).

C43, C44, C108, and C139 together coordinate [4Fe-4S] cluster.

The protein belongs to the complex I 20 kDa subunit family. In terms of assembly, NDH is composed of at least 16 different subunits, 5 of which are encoded in the nucleus. [4Fe-4S] cluster serves as cofactor.

Its subcellular location is the plastid. The protein localises to the chloroplast thylakoid membrane. The enzyme catalyses a plastoquinone + NADH + (n+1) H(+)(in) = a plastoquinol + NAD(+) + n H(+)(out). It carries out the reaction a plastoquinone + NADPH + (n+1) H(+)(in) = a plastoquinol + NADP(+) + n H(+)(out). NDH shuttles electrons from NAD(P)H:plastoquinone, via FMN and iron-sulfur (Fe-S) centers, to quinones in the photosynthetic chain and possibly in a chloroplast respiratory chain. The immediate electron acceptor for the enzyme in this species is believed to be plastoquinone. Couples the redox reaction to proton translocation, and thus conserves the redox energy in a proton gradient. In Illicium oligandrum (Star anise), this protein is NAD(P)H-quinone oxidoreductase subunit K, chloroplastic.